Here is a 453-residue protein sequence, read N- to C-terminus: Zinc finger and BTB domain-containing protein 44 (453 aa).

K4 is covalently cross-linked (Glycyl lysine isopeptide (Lys-Gly) (interchain with G-Cter in SUMO2)). The BTB domain maps to 31–98 (CDITIRVQDR…AYTATLSINT (68 aa)). 7 positions are modified to phosphoserine: S135, S159, S161, S165, S191, S194, and S199. The residue at position 200 (T200) is a Phosphothreonine. The segment at 241–265 (QPEKAKQAENTRTLELPGPSEAGRR) is disordered. A Glycyl lysine isopeptide (Lys-Gly) (interchain with G-Cter in SUMO2) cross-link involves residue K290. 2 disordered regions span residues 295 to 324 (SDEE…PGSE) and 336 to 368 (SSSI…EDDR). Positions 304 to 318 (SQPVSASQSSLSDQQ) are enriched in low complexity. A compositionally biased stretch (polar residues) spans 352-361 (TLQSTSSTNA). 2 C2H2-type zinc fingers span residues 399 to 421 (FQCP…MLIH) and 427 to 449 (FQCD…RLKH).

It localises to the nucleus. In Rattus norvegicus (Rat), this protein is Zinc finger and BTB domain-containing protein 44 (Zbtb44).